A 372-amino-acid polypeptide reads, in one-letter code: Probable O-methyltransferase 2 (372 aa).

Gly216, Asp259, and Lys273 together coordinate S-adenosyl-L-methionine. His277 serves as the catalytic Proton acceptor.

The protein belongs to the class I-like SAM-binding methyltransferase superfamily. Cation-independent O-methyltransferase family. COMT subfamily. Homodimer. Expressed predominantly in root hairs.

O-methyltransferase of unknown substrate specificity. Not active on resorcinol, orcinol, guaiacol, eugenol, ferulic acid, p-coumaric acid, catechol, caffeic acid or monomethyl ethers of resorcinol or orcinol. This Sorghum bicolor (Sorghum) protein is Probable O-methyltransferase 2 (OMT2).